Reading from the N-terminus, the 221-residue chain is Phosphoenolpyruvate guanylyltransferase (221 aa).

Threonine 154, glycine 169, and serine 172 together coordinate phosphoenolpyruvate.

This sequence belongs to the CofC family.

It carries out the reaction phosphoenolpyruvate + GTP + H(+) = enolpyruvoyl-2-diphospho-5'-guanosine + diphosphate. The protein operates within cofactor biosynthesis; coenzyme F420 biosynthesis. Functionally, guanylyltransferase that catalyzes the activation of phosphoenolpyruvate (PEP) as enolpyruvoyl-2-diphospho-5'-guanosine, via the condensation of PEP with GTP. It is involved in the biosynthesis of coenzyme F420, a hydride carrier cofactor. This is Phosphoenolpyruvate guanylyltransferase from Mycolicibacterium smegmatis (strain ATCC 700084 / mc(2)155) (Mycobacterium smegmatis).